The primary structure comprises 469 residues: Uronate isomerase (469 aa).

It belongs to the metallo-dependent hydrolases superfamily. Uronate isomerase family.

The enzyme catalyses D-glucuronate = D-fructuronate. It carries out the reaction aldehydo-D-galacturonate = keto-D-tagaturonate. It participates in carbohydrate metabolism; pentose and glucuronate interconversion. The chain is Uronate isomerase from Yersinia pseudotuberculosis serotype O:1b (strain IP 31758).